A 201-amino-acid chain; its full sequence is Holliday junction branch migration complex subunit RuvA (201 aa).

The domain I stretch occupies residues 1 to 63 (MIASVRGEVL…EDSMTLYGFA (63 aa)). Residues 64–142 (DTEARDLFGL…LVPVQAGPPG (79 aa)) form a domain II region. Residues 143 to 153 (STPAVAATPVR) are flexible linker. Residues 153 to 201 (REQVVEALTGLGFPLKQAEQALDTVLAEQPAADTSTALRAALSLLGKNR) are domain III.

It belongs to the RuvA family. In terms of assembly, homotetramer. Forms an RuvA(8)-RuvB(12)-Holliday junction (HJ) complex. HJ DNA is sandwiched between 2 RuvA tetramers; dsDNA enters through RuvA and exits via RuvB. An RuvB hexamer assembles on each DNA strand where it exits the tetramer. Each RuvB hexamer is contacted by two RuvA subunits (via domain III) on 2 adjacent RuvB subunits; this complex drives branch migration. In the full resolvosome a probable DNA-RuvA(4)-RuvB(12)-RuvC(2) complex forms which resolves the HJ.

It is found in the cytoplasm. In terms of biological role, the RuvA-RuvB-RuvC complex processes Holliday junction (HJ) DNA during genetic recombination and DNA repair, while the RuvA-RuvB complex plays an important role in the rescue of blocked DNA replication forks via replication fork reversal (RFR). RuvA specifically binds to HJ cruciform DNA, conferring on it an open structure. The RuvB hexamer acts as an ATP-dependent pump, pulling dsDNA into and through the RuvAB complex. HJ branch migration allows RuvC to scan DNA until it finds its consensus sequence, where it cleaves and resolves the cruciform DNA. The chain is Holliday junction branch migration complex subunit RuvA from Nocardia farcinica (strain IFM 10152).